Consider the following 514-residue polypeptide: Glutamate--cysteine ligase, chloroplastic (514 aa).

A chloroplast-targeting transit peptide spans 1–55; the sequence is MALLSQAGGAYTVPSGHVSSRTGTKTVSGCVNVLRMKETYVSSYSRTLSTKSMLK. 2 disulfide bridges follow: C178–C398 and C341–C356.

This sequence belongs to the carboxylate-amine ligase family. Glutamate--cysteine ligase type 2 subfamily. As to quaternary structure, homodimer or monomer when oxidized or reduced, respectively. In terms of processing, the Cys-178-Cys-398 disulfide bridge is known to modulate the enzyme activity according to the redox status. The oxidized form constitutes the active enzyme.

Its subcellular location is the plastid. It localises to the chloroplast. It carries out the reaction L-cysteine + L-glutamate + ATP = gamma-L-glutamyl-L-cysteine + ADP + phosphate + H(+). The protein operates within sulfur metabolism; glutathione biosynthesis; glutathione from L-cysteine and L-glutamate: step 1/2. Its function is as follows. Participates in the detoxification process. This chain is Glutamate--cysteine ligase, chloroplastic (GSH1), found in Brassica juncea (Indian mustard).